The primary structure comprises 308 residues: Mannan endo-1,4-beta-mannosidase (308 aa).

Catalysis depends on E125, which acts as the Proton donor. The active-site Nucleophile is the E220. The interval 284–308 is disordered; the sequence is DGLQETSKPSTVFTDDNGGHPEPPT. Polar residues predominate over residues 287-297; it reads QETSKPSTVFT.

This sequence belongs to the glycosyl hydrolase 5 (cellulase A) family.

The catalysed reaction is Random hydrolysis of (1-&gt;4)-beta-D-mannosidic linkages in mannans, galactomannans and glucomannans.. Its function is as follows. Catalyzes the endo hydrolysis of beta-1,4-linked mannan, galactomannan and glucomannan. It is able to hydrolyze mannosidic linkages that are flanked by mannose or glucose. The polypeptide is Mannan endo-1,4-beta-mannosidase (Salipaludibacillus agaradhaerens (Bacillus agaradhaerens)).